We begin with the raw amino-acid sequence, 111 residues long: Putative single-stranded DNA-binding protein ycf41 (111 aa).

Residues 1-98 enclose the SSB domain; sequence MNSCTLLVQI…FSTSRIFKYK (98 aa).

Its subcellular location is the plastid. It is found in the chloroplast. This is Putative single-stranded DNA-binding protein ycf41 (ycf41) from Pyropia yezoensis (Susabi-nori).